A 739-amino-acid chain; its full sequence is Thiamine biosynthesis multifunctional protein ThiED (739 aa).

A thiamine-phosphate synthase region spans residues 1-210 (MTDFSLYLVT…PSPAEAAREL (210 aa)). Residues 37-41 (QLRDK) and Asn69 contribute to the 4-amino-2-methyl-5-(diphosphooxymethyl)pyrimidine site. Residues Asp70 and Asp88 each coordinate Mg(2+). Thr107 is a binding site for 4-amino-2-methyl-5-(diphosphooxymethyl)pyrimidine. A 2-[(2R,5Z)-2-carboxy-4-methylthiazol-5(2H)-ylidene]ethyl phosphate-binding site is contributed by 140-142 (TDT). Residue Lys143 coordinates 4-amino-2-methyl-5-(diphosphooxymethyl)pyrimidine. 2-[(2R,5Z)-2-carboxy-4-methylthiazol-5(2H)-ylidene]ethyl phosphate contacts are provided by residues Gly174 and 194 to 195 (VS). The tract at residues 226–481 (LTIAGTDPTG…GSGSGPVDHF (256 aa)) is hydroxymethylpyrimidine/phosphomethylpyrimidine kinase. Gln263 provides a ligand contact to 4-amino-5-hydroxymethyl-2-methylpyrimidine. A thiaminase-2 region spans residues 527-739 (YTRALWEATG…FDQATRQGWN (213 aa)).

In the N-terminal section; belongs to the thiamine-phosphate synthase family. It in the central section; belongs to the ThiD family. This sequence in the C-terminal section; belongs to the thiaminase-2 family. It depends on Mg(2+) as a cofactor.

It carries out the reaction 2-[(2R,5Z)-2-carboxy-4-methylthiazol-5(2H)-ylidene]ethyl phosphate + 4-amino-2-methyl-5-(diphosphooxymethyl)pyrimidine + 2 H(+) = thiamine phosphate + CO2 + diphosphate. The catalysed reaction is 2-(2-carboxy-4-methylthiazol-5-yl)ethyl phosphate + 4-amino-2-methyl-5-(diphosphooxymethyl)pyrimidine + 2 H(+) = thiamine phosphate + CO2 + diphosphate. The enzyme catalyses 4-methyl-5-(2-phosphooxyethyl)-thiazole + 4-amino-2-methyl-5-(diphosphooxymethyl)pyrimidine + H(+) = thiamine phosphate + diphosphate. It catalyses the reaction 4-amino-5-hydroxymethyl-2-methylpyrimidine + ATP = 4-amino-2-methyl-5-(phosphooxymethyl)pyrimidine + ADP + H(+). It carries out the reaction 4-amino-2-methyl-5-(phosphooxymethyl)pyrimidine + ATP = 4-amino-2-methyl-5-(diphosphooxymethyl)pyrimidine + ADP. It functions in the pathway cofactor biosynthesis; thiamine diphosphate biosynthesis; 4-amino-2-methyl-5-diphosphomethylpyrimidine from 5-amino-1-(5-phospho-D-ribosyl)imidazole: step 3/3. It participates in cofactor biosynthesis; thiamine diphosphate biosynthesis; thiamine phosphate from 4-amino-2-methyl-5-diphosphomethylpyrimidine and 4-methyl-5-(2-phosphoethyl)-thiazole: step 1/1. In terms of biological role, condenses 4-methyl-5-(beta-hydroxyethyl)thiazole monophosphate (THZ-P) and 2-methyl-4-amino-5-hydroxymethyl pyrimidine pyrophosphate (HMP-PP) to form thiamine monophosphate (TMP). Functionally, catalyzes the phosphorylation of hydroxymethylpyrimidine phosphate (HMP-P) to HMP-PP, and of HMP to HMP-P. The chain is Thiamine biosynthesis multifunctional protein ThiED (thiED) from Corynebacterium efficiens (strain DSM 44549 / YS-314 / AJ 12310 / JCM 11189 / NBRC 100395).